A 136-amino-acid polypeptide reads, in one-letter code: MKKSNFSNVNLSMGTGRRKSSVARVYIREGSGNIRVNNRDFDSYIQLENLRTMALSPLVLTNTLGKYDLYINVYGGGISGQSGAIRHGISRALFELDESNKMILRSNGFLTRDSRRVERKKFGQKKARKSFQFSKR.

Belongs to the universal ribosomal protein uS9 family.

This is Small ribosomal subunit protein uS9 from Borrelia garinii subsp. bavariensis (strain ATCC BAA-2496 / DSM 23469 / PBi) (Borreliella bavariensis).